Here is a 68-residue protein sequence, read N- to C-terminus: MGMRMMFTVFLLVVLATTVVSFTSDRGSDGRNAAAKDKASDLVALTVKGCCSNPPCYANNQAYCNGRR.

Positions 1-21 (MGMRMMFTVFLLVVLATTVVS) are cleaved as a signal peptide. Residues 22 to 48 (FTSDRGSDGRNAAAKDKASDLVALTVK) constitute a propeptide that is removed on maturation. 2 disulfide bridges follow: C50-C56 and C51-C64. Residues 52-54 (SNP) form a ser-Xaa-Pro motif, crucial for potent interaction with nAChR region. An Asparagine amide modification is found at N65.

It belongs to the conotoxin A superfamily. Expressed by the venom duct.

The protein resides in the secreted. Alpha-conotoxins act on postsynaptic membranes, they bind to the nicotinic acetylcholine receptors (nAChR) and thus inhibit them. This Conus marmoreus (Marble cone) protein is Alpha-conotoxin-like Mr1.2.